We begin with the raw amino-acid sequence, 653 residues long: Modification methylase StsI (653 aa).

It belongs to the N(4)/N(6)-methyltransferase family. In terms of assembly, monomer.

The enzyme catalyses a 2'-deoxyadenosine in DNA + S-adenosyl-L-methionine = an N(6)-methyl-2'-deoxyadenosine in DNA + S-adenosyl-L-homocysteine + H(+). In terms of biological role, an alpha subtype methylase that recognizes the double-stranded sequence 5'-GGATG-3' in one strand and 3'-CATCC-5' in the other, methylates A of both strands, and protects the DNA from cleavage by the StsI endonuclease. The 2 domains of the protein participate in modification of the two strands. The protein is Modification methylase StsI (stsIM) of Streptococcus sanguinis.